Consider the following 838-residue polypeptide: Envelope glycoprotein H (838 aa).

Positions Met1 to Gly18 are cleaved as a signal peptide. At Gln19–Pro803 the chain is on the virion surface side. N-linked (GlcNAc...) asparagine; by host glycans are attached at residues Asn73 and Asn120. The interval Phe174–His204 is disordered. The N-linked (GlcNAc...) asparagine; by host glycan is linked to Asn216. An interaction with gL region spans residues Asp259–Val323. Residues Asn332, Asn437, Asn670, and Asn784 are each glycosylated (N-linked (GlcNAc...) asparagine; by host). The helical transmembrane segment at Gly804–Leu824 threads the bilayer. Residues Lys825 to Glu838 lie on the Intravirion side of the membrane.

Belongs to the herpesviridae glycoprotein H family. As to quaternary structure, interacts with glycoprotein L (gL); this interaction is necessary for the correct processing and cell surface expression of gH. The heterodimer gH/gL seems to interact with gB trimers during fusion. Associates with the gB-gH/gL-gD complex. Interacts with VP16. Post-translationally, N-glycosylated, O-glycosylated, and sialylated.

The protein localises to the virion membrane. The protein resides in the host cell membrane. Its subcellular location is the host endosome membrane. Functionally, the heterodimer glycoprotein H-glycoprotein L is required for the fusion of viral and plasma membranes leading to virus entry into the host cell. Following initial binding to host receptor, membrane fusion is mediated by the fusion machinery composed of gB and the heterodimer gH/gL. May also be involved in the fusion between the virion envelope and the outer nuclear membrane during virion morphogenesis. This is Envelope glycoprotein H from Human herpesvirus 1 (strain 17) (HHV-1).